The following is a 514-amino-acid chain: Probable cysteine protease ATG4 (514 aa).

Residues 1–15 (MAREDASVPRSHDSA) are compositionally biased toward basic and acidic residues. 2 disordered regions span residues 1–28 (MARE…EIPV) and 61–84 (DSSD…DSAQ). The active-site Nucleophile is the Cys-166. Active-site residues include Asp-336 and His-338. The disordered stretch occupies residues 461–514 (ATPSAEDTVPVSTLSASESEITTSSYETPTSKDDNSSRASLDVVVLDTTGEQQE). The span at 472-489 (STLSASESEITTSSYETP) shows a compositional bias: low complexity.

The protein belongs to the peptidase C54 family.

The protein localises to the cytoplasm. The protein resides in the nucleus. Its subcellular location is the preautophagosomal structure. The catalysed reaction is [protein]-C-terminal L-amino acid-glycyl-phosphatidylethanolamide + H2O = [protein]-C-terminal L-amino acid-glycine + a 1,2-diacyl-sn-glycero-3-phosphoethanolamine. In terms of biological role, cysteine protease that plays a key role in cytoplasm to vacuole transport (Cvt) and autophagy by mediating both proteolytic activation and delipidation of ATG8. Required for selective autophagic degradation of the nucleus (nucleophagy) as well as for mitophagy which contributes to regulate mitochondrial quantity and quality by eliminating the mitochondria to a basal level to fulfill cellular energy requirements and preventing excess ROS production. The protease activity is required for proteolytic activation of ATG8: cleaves the C-terminal amino acid of ATG8 to reveal a C-terminal glycine. ATG8 ubiquitin-like activity requires the exposure of the glycine at the C-terminus for its conjugation to phosphatidylethanolamine (PE) and its insertion to membranes, which is necessary for autophagy. The ATG8-PE conjugate mediates tethering between adjacent membranes and stimulates membrane hemifusion, leading to expansion of the autophagosomal membrane during autophagy. In addition to the protease activity, also catalyzes deconjugation of PE-conjugated forms of ATG8 during macroautophagy: ATG8 delipidation is required to release the protein from membranes, which facilitates multiple events during macroautophagy, and especially for efficient autophagosome biogenesis, the assembly of ATG9-containing tubulovesicular clusters into phagophores/autophagosomes, and for the disassembly of PAS-associated ATG components. ATG8 delipidation by ATG4 also recycles ATG8-PE generated on inappropriate membranes to maintain a reservoir of unlipidated ATG8 that is required for autophagosome formation at the PAS. This is Probable cysteine protease ATG4 (ATG4) from Scheffersomyces stipitis (strain ATCC 58785 / CBS 6054 / NBRC 10063 / NRRL Y-11545) (Yeast).